The chain runs to 354 residues: Maleylacetate reductase 1 (354 aa).

The protein belongs to the iron-containing alcohol dehydrogenase family. In terms of assembly, homodimer.

The catalysed reaction is 3-oxoadipate + NAD(+) = maleylacetate + NADH + H(+). It carries out the reaction 3-oxoadipate + NADP(+) = maleylacetate + NADPH + H(+). It participates in aromatic compound metabolism; 3-chlorocatechol degradation. This Cupriavidus pinatubonensis (strain JMP 134 / LMG 1197) (Cupriavidus necator (strain JMP 134)) protein is Maleylacetate reductase 1 (tfdFI).